The primary structure comprises 198 residues: NAD(P)H dehydrogenase (quinone) (198 aa).

The region spanning 4 to 189 (ILVLYYSMYG…AIARYQGEHV (186 aa)) is the Flavodoxin-like domain. FMN contacts are provided by residues 10–15 (SMYGHI) and 78–80 (TRF). Y12 serves as a coordination point for NAD(+). Position 98 (W98) interacts with substrate. FMN is bound by residues 113 to 118 (STGTGG) and H133.

The protein belongs to the WrbA family. The cofactor is FMN.

The catalysed reaction is a quinone + NADH + H(+) = a quinol + NAD(+). It catalyses the reaction a quinone + NADPH + H(+) = a quinol + NADP(+). This chain is NAD(P)H dehydrogenase (quinone), found in Klebsiella pneumoniae (strain 342).